Here is a 221-residue protein sequence, read N- to C-terminus: Chalcone--flavanone isomerase (221 aa).

3 residues coordinate substrate: Thr-52, Asn-117, and Ser-193.

This sequence belongs to the chalcone isomerase family. As to expression, flowers.

It carries out the reaction a chalcone = a flavanone.. It functions in the pathway secondary metabolite biosynthesis; flavonoid biosynthesis. Its function is as follows. Catalyzes the intramolecular cyclization of bicyclic chalcones into tricyclic (S)-flavanones. Responsible for the isomerization of 4,2',4',6'-tetrahydroxychalcone (also termed chalcone) into naringenin. This chain is Chalcone--flavanone isomerase (CHI), found in Gentiana triflora (Clustered gentian).